The following is a 294-amino-acid chain: NAD kinase (294 aa).

The active-site Proton acceptor is the D74. Residues 74-75, 148-149, H159, R176, D178, and 189-194 contribute to the NAD(+) site; these read DG, NE, and TAYSLS.

Belongs to the NAD kinase family. A divalent metal cation is required as a cofactor.

The protein resides in the cytoplasm. The catalysed reaction is NAD(+) + ATP = ADP + NADP(+) + H(+). Involved in the regulation of the intracellular balance of NAD and NADP, and is a key enzyme in the biosynthesis of NADP. Catalyzes specifically the phosphorylation on 2'-hydroxyl of the adenosine moiety of NAD to yield NADP. The polypeptide is NAD kinase (Pseudoalteromonas translucida (strain TAC 125)).